Consider the following 417-residue polypeptide: Serine hydroxymethyltransferase (417 aa).

Lys54 bears the N6-acetyllysine mark. Residues Leu121 and 125–127 (GHL) each bind (6S)-5,6,7,8-tetrahydrofolate. Lys229 is subject to N6-(pyridoxal phosphate)lysine. 3 positions are modified to N6-acetyllysine: Lys250, Lys285, and Lys354. 355-357 (SPF) lines the (6S)-5,6,7,8-tetrahydrofolate pocket. Lys375 is modified (N6-acetyllysine).

Belongs to the SHMT family. Homodimer. It depends on pyridoxal 5'-phosphate as a cofactor.

The protein resides in the cytoplasm. It carries out the reaction (6R)-5,10-methylene-5,6,7,8-tetrahydrofolate + glycine + H2O = (6S)-5,6,7,8-tetrahydrofolate + L-serine. Its pathway is one-carbon metabolism; tetrahydrofolate interconversion. The protein operates within amino-acid biosynthesis; glycine biosynthesis; glycine from L-serine: step 1/1. Its function is as follows. Catalyzes the reversible interconversion of serine and glycine with tetrahydrofolate (THF) serving as the one-carbon carrier. This reaction serves as the major source of one-carbon groups required for the biosynthesis of purines, thymidylate, methionine, and other important biomolecules. Also exhibits THF-independent aldolase activity toward beta-hydroxyamino acids, producing glycine and aldehydes, via a retro-aldol mechanism. This Shigella sonnei (strain Ss046) protein is Serine hydroxymethyltransferase.